Reading from the N-terminus, the 1019-residue chain is Phosphatidylinositol 3,4,5-trisphosphate 5-phosphatase 1 (1019 aa).

The SH2 domain maps to 5-101 (WYHGNITRSK…GLVTHLQYPI (97 aa)). Positions 103–116 (KEEEGPEEPDEEQE) are enriched in acidic residues. Disordered regions lie at residues 103–133 (KEEE…TPPS) and 909–1019 (ETQN…PPTA). The short motif at 120-125 (PNVPPR) is the SH3-binding 1 element. 2 stretches are compositionally biased toward polar residues: residues 909–931 (ETQN…KQSP) and 958–980 (PITS…TNRT). Positions 966–971 (TLSTQK) match the SH3-binding 2 motif. The short motif at 1004–1007 (NPLY) is the NPXY motif element. The residue at position 1007 (Tyr-1007) is a Phosphotyrosine. Positions 1010-1019 (VNNTLYPPTA) are enriched in polar residues.

It belongs to the inositol 1,4,5-trisphosphate 5-phosphatase family. Tyrosine phosphorylated by the members of the SRC family after exposure to a diverse array of extracellular stimuli.

It localises to the cytoplasm. The protein localises to the cell membrane. It is found in the membrane raft. The protein resides in the cytoskeleton. The catalysed reaction is a 1,2-diacyl-sn-glycero-3-phospho-(1D-myo-inositol-3,4,5-trisphosphate) + H2O = a 1,2-diacyl-sn-glycero-3-phospho-(1D-myo-inositol-3,4-bisphosphate) + phosphate. It catalyses the reaction 1D-myo-inositol 1,3,4,5-tetrakisphosphate + H2O = 1D-myo-inositol 1,3,4-trisphosphate + phosphate. The enzyme catalyses a 1,2-diacyl-sn-glycero-3-phospho-(1D-myo-inositol-4,5-bisphosphate) + H2O = a 1,2-diacyl-sn-glycero-3-phospho-(1D-myo-inositol 4-phosphate) + phosphate. In terms of biological role, phosphatidylinositol (PtdIns) phosphatase that specifically hydrolyzes the 5-phosphate of phosphatidylinositol-3,4,5-trisphosphate (PtdIns(3,4,5)P3) to produce PtdIns(3,4)P2, thereby negatively regulating the PI3K (phosphoinositide 3-kinase) pathways. Able also to hydrolyzes the 5-phosphate of phosphatidylinositol-4,5-bisphosphate (PtdIns(4,5)P3) and inositol 1,3,4,5-tetrakisphosphate. Acts as a negative regulator of B-cell antigen receptor signaling. Mediates signaling from the FC-gamma-RIIB receptor (FCGR2B), playing a central role in terminating signal transduction from activating immune/hematopoietic cell receptor systems. Acts as a negative regulator of myeloid cell proliferation/survival and chemotaxis, mast cell degranulation, immune cells homeostasis, integrin alpha-IIb/beta-3 signaling in platelets and JNK signaling in B-cells. The sequence is that of Phosphatidylinositol 3,4,5-trisphosphate 5-phosphatase 1 (inpp5d) from Xenopus laevis (African clawed frog).